A 274-amino-acid polypeptide reads, in one-letter code: Large ribosomal subunit protein uL2 (274 aa).

A disordered region spans residues valine 223–tyrosine 256.

The protein belongs to the universal ribosomal protein uL2 family. As to quaternary structure, part of the 50S ribosomal subunit. Forms a bridge to the 30S subunit in the 70S ribosome.

In terms of biological role, one of the primary rRNA binding proteins. Required for association of the 30S and 50S subunits to form the 70S ribosome, for tRNA binding and peptide bond formation. It has been suggested to have peptidyltransferase activity; this is somewhat controversial. Makes several contacts with the 16S rRNA in the 70S ribosome. The polypeptide is Large ribosomal subunit protein uL2 (Trichlorobacter lovleyi (strain ATCC BAA-1151 / DSM 17278 / SZ) (Geobacter lovleyi)).